Consider the following 44-residue polypeptide: Photosystem I reaction center subunit IX (44 aa).

A helical transmembrane segment spans residues 7 to 27 (YLSVAPVASTLWFVALAGLLI).

It belongs to the PsaJ family.

It is found in the plastid. The protein localises to the chloroplast thylakoid membrane. Functionally, may help in the organization of the PsaE and PsaF subunits. This Cicer arietinum (Chickpea) protein is Photosystem I reaction center subunit IX.